The chain runs to 100 residues: Small ribosomal subunit protein uS14c (100 aa).

Belongs to the universal ribosomal protein uS14 family. Part of the 30S ribosomal subunit.

It localises to the plastid. It is found in the chloroplast. Functionally, binds 16S rRNA, required for the assembly of 30S particles. This Chaetosphaeridium globosum (Charophycean green alga) protein is Small ribosomal subunit protein uS14c.